The primary structure comprises 160 residues: Phosphopantetheine adenylyltransferase (160 aa).

Thr-10 contributes to the substrate binding site. ATP is bound by residues 10-11 (TF) and His-18. Residues Lys-42, Leu-74, and Arg-88 each contribute to the substrate site. Residues 89 to 91 (GLR), Glu-99, and 124 to 130 (HGFLSST) each bind ATP.

This sequence belongs to the bacterial CoaD family. Homohexamer. The cofactor is Mg(2+).

It is found in the cytoplasm. It catalyses the reaction (R)-4'-phosphopantetheine + ATP + H(+) = 3'-dephospho-CoA + diphosphate. The protein operates within cofactor biosynthesis; coenzyme A biosynthesis; CoA from (R)-pantothenate: step 4/5. Reversibly transfers an adenylyl group from ATP to 4'-phosphopantetheine, yielding dephospho-CoA (dPCoA) and pyrophosphate. This is Phosphopantetheine adenylyltransferase from Aliivibrio fischeri (strain MJ11) (Vibrio fischeri).